Consider the following 88-residue polypeptide: UPF0367 protein Tery_1229 (88 aa).

The protein belongs to the UPF0367 family.

The chain is UPF0367 protein Tery_1229 from Trichodesmium erythraeum (strain IMS101).